A 351-amino-acid chain; its full sequence is S-adenosylmethionine:tRNA ribosyltransferase-isomerase (351 aa).

It belongs to the QueA family. In terms of assembly, monomer.

It is found in the cytoplasm. The catalysed reaction is 7-aminomethyl-7-carbaguanosine(34) in tRNA + S-adenosyl-L-methionine = epoxyqueuosine(34) in tRNA + adenine + L-methionine + 2 H(+). Its pathway is tRNA modification; tRNA-queuosine biosynthesis. Its function is as follows. Transfers and isomerizes the ribose moiety from AdoMet to the 7-aminomethyl group of 7-deazaguanine (preQ1-tRNA) to give epoxyqueuosine (oQ-tRNA). In Sphingopyxis alaskensis (strain DSM 13593 / LMG 18877 / RB2256) (Sphingomonas alaskensis), this protein is S-adenosylmethionine:tRNA ribosyltransferase-isomerase.